The chain runs to 133 residues: Small ribosomal subunit protein uS8 (133 aa).

It belongs to the universal ribosomal protein uS8 family. Part of the 30S ribosomal subunit. Contacts proteins S5 and S12.

One of the primary rRNA binding proteins, it binds directly to 16S rRNA central domain where it helps coordinate assembly of the platform of the 30S subunit. The protein is Small ribosomal subunit protein uS8 of Synechococcus sp. (strain CC9605).